We begin with the raw amino-acid sequence, 290 residues long: Acetyl-coenzyme A carboxylase carboxyl transferase subunit beta (290 aa).

A CoA carboxyltransferase N-terminal domain is found at Leu-27–Ala-290. Residues Cys-31, Cys-34, Cys-50, and Cys-53 each coordinate Zn(2+). The C4-type zinc-finger motif lies at Cys-31–Cys-53.

Belongs to the AccD/PCCB family. Acetyl-CoA carboxylase is a heterohexamer composed of biotin carboxyl carrier protein (AccB), biotin carboxylase (AccC) and two subunits each of ACCase subunit alpha (AccA) and ACCase subunit beta (AccD). Zn(2+) is required as a cofactor.

The protein localises to the cytoplasm. It carries out the reaction N(6)-carboxybiotinyl-L-lysyl-[protein] + acetyl-CoA = N(6)-biotinyl-L-lysyl-[protein] + malonyl-CoA. It functions in the pathway lipid metabolism; malonyl-CoA biosynthesis; malonyl-CoA from acetyl-CoA: step 1/1. Component of the acetyl coenzyme A carboxylase (ACC) complex. Biotin carboxylase (BC) catalyzes the carboxylation of biotin on its carrier protein (BCCP) and then the CO(2) group is transferred by the transcarboxylase to acetyl-CoA to form malonyl-CoA. The protein is Acetyl-coenzyme A carboxylase carboxyl transferase subunit beta of Pseudomonas aeruginosa (strain UCBPP-PA14).